The following is a 327-amino-acid chain: MFLRRRNLNSSRIICIISIIVLLLIIISLYPHKRTQFGRYSRRQKTIRFQHSTGEIGDQLFSLLSHLGVAKTLYRIPVINSANNSKLIDTLSNAMFTRFPSILQQFLIAIEPPTAVNRELGIENSSYEDPLTKFSEDTSSSLMVKGNGFKSFKYFDNLRSDIRLWVLEDAESVLEAQNLITKSQRNNFKICVHATLESNKNCSVKAIAQILNHYTNEYEDVMLIIASPFPEFTRFIFTNSRIRKYKTEKFSLISSSPEMQIIFSRIYCDVVFLTVPYSTHGWWMGYLAKDDNSHVFYFDPDMFPKNRTANQEDYFPPKWKKLSRKIQ.

The chain crosses the membrane as a helical span at residues 13-33 (IICIISIIVLLLIIISLYPHK).

It localises to the membrane. This is an uncharacterized protein from Caenorhabditis elegans.